Consider the following 302-residue polypeptide: MADTIFSSGNDQWVCPNDRQLALRAKLQTGWSVHTYQTEKQRRSQCLSPGELEIILQVIQRAERLDILEQQRIGRLVERLETMQRNVMGNGLSQCLLCGEVLGFLGSSSVFCKDCRKKVCTKCGIEASPGQKRPLWLCKICSEQREVWKRSGAWFYKGLPKYILPLKTPGRADDPHFRPLPVEPTETQPPSAETSRVYTWARGRVVSSDSDSDSDLSSSSLEDRPLPSGVKGTKGDKPRGDSGASMESPRLGPARPPSHLSGSQSSLGSEAGTGATEPQGGTPAQPEPRVPGKRHTWATPRY.

Residues 41–158 (QRRSQCLSPG…KRSGAWFYKG (118 aa)) enclose the RabBD domain. The segment at 89–146 (GNGLSQCLLCGEVLGFLGSSSVFCKDCRKKVCTKCGIEASPGQKRPLWLCKICSEQRE) adopts an FYVE-type zinc-finger fold. Residues Cys-95, Cys-98, Cys-112, Cys-115, Cys-120, Cys-123, Cys-138, and Cys-141 each coordinate Zn(2+). A disordered region spans residues 174–302 (DPHFRPLPVE…KRHTWATPRY (129 aa)). The span at 185 to 197 (TETQPPSAETSRV) shows a compositional bias: polar residues. Ser-248 is subject to Phosphoserine. Residues 258-269 (SHLSGSQSSLGS) are compositionally biased toward low complexity.

Recruited to dense-core vesicles through specific interaction with RAB27A in endocrine cells. Interacts with RAB3A, RAB3B, RAB3C and RAB3D. Interacts with ZYX. Highly expressed in pancreatic islets. High to moderate expression in adrenal gland, pituitary gland and ovary.

The protein localises to the cytoplasm. It localises to the cytoplasmic vesicle. Its subcellular location is the secretory vesicle membrane. Rab GTPase effector involved in the late steps of regulated exocytosis, both in endocrine and exocrine cells. Regulates the exocytosis of dense-core vesicles in neuroendocrine cells through interaction with RAB27A. Acts as a potential RAB3B effector protein in epithelial cells. The chain is Rab effector Noc2 (Rph3al) from Mus musculus (Mouse).